The chain runs to 313 residues: MPIKIPDQLPATEVLREENIFFMQESRATTQAIRPLKVIILNLMPKKIETETQFLRLLSNSPLQVDVELLRIDNRTSKNTPTEHLDTFYRQFEGIKDRNFDGLIITGAPLGLVQFEDVIYWDHLQTIMTWAKDHVTSSLYVCWAAQAGLKLLYDLPKRTRKEKLSGVYKHTNLDQHHPILRGFDDQFLAPHSRYADFSADYLKSHTDLDILATSKEAGVYLAATKDKRNVFVTGHPEYDSFTLHNEYVRDLGEGMEPTIPVNYYPDDNPDITPKATWRSHGHLLFSNWLNYCVYQQTPYDLEHFSEQNFTRDE.

The active-site Acyl-thioester intermediate is the Cys142. Residues Lys163 and Ser192 each contribute to the substrate site. His235 functions as the Proton acceptor in the catalytic mechanism. Glu237 is a catalytic residue. Arg249 serves as a coordination point for substrate.

It belongs to the MetA family.

It localises to the cytoplasm. The enzyme catalyses L-homoserine + succinyl-CoA = O-succinyl-L-homoserine + CoA. It participates in amino-acid biosynthesis; L-methionine biosynthesis via de novo pathway; O-succinyl-L-homoserine from L-homoserine: step 1/1. In terms of biological role, transfers a succinyl group from succinyl-CoA to L-homoserine, forming succinyl-L-homoserine. This is Homoserine O-succinyltransferase from Aliivibrio fischeri (strain MJ11) (Vibrio fischeri).